Reading from the N-terminus, the 209-residue chain is Glutathione S-transferase 1, isoform D (209 aa).

The region spanning 1–80 (MDFYYLPGSA…YLAEKYGKDD (80 aa)) is the GST N-terminal domain. Residues S9, 50-52 (HCI), and 64-66 (ESR) each bind glutathione. Positions 86–207 (DPQKRAVVNQ…AGADEFKAKF (122 aa)) constitute a GST C-terminal domain.

This sequence belongs to the GST superfamily. Theta family. In terms of assembly, homodimer.

The catalysed reaction is RX + glutathione = an S-substituted glutathione + a halide anion + H(+). It carries out the reaction 1,1,1-trichloro-2,2-bis(4-chlorophenyl)ethane = 1,1-dichloro-2,2-bis(4-chlorophenyl)ethylene + chloride + H(+). Its activity is regulated as follows. Inhibited by S-hexylglutathione. In terms of biological role, conjugation of reduced glutathione to a wide number of exogenous and endogenous hydrophobic electrophiles. Has DDT dehydrochlorinase activity. In Anopheles gambiae (African malaria mosquito), this protein is Glutathione S-transferase 1, isoform D (GstD1).